The following is a 687-amino-acid chain: Chloride channel protein ClC-Kb (687 aa).

Residues 1–50 (MEELVGLREGASKKPVPLQELWGPCPRIRRNIQGGLEWLKERLFRVGEDW) lie on the Cytoplasmic side of the membrane. A run of 2 helical transmembrane segments spans residues 51–82 (YFLV…KWLY) and 91–111 (LRYL…SGFS). Positions 116–127 (PSSGGSGIPEVK) form an intramembrane region, helical. S121 provides a ligand contact to chloride. 2 helical membrane-spanning segments follow: residues 141–160 (IKNF…TGST) and 161–180 (IFLG…AAYL). Positions 203–224 (AGAAVGVATVFAAPISGVLFSI) form an intramembrane region, helical. A helical membrane pass occupies residues 236–255 (YWRGFFAATCGAFMFHLLAV). Ca(2+) is bound by residues E259, E261, D278, and E281. The next 2 membrane-spanning stretches (helical) occupy residues 282-310 (IFFF…LFFL) and 325-342 (PLYS…TYPP). The helical intramembrane region spans 349-360 (ASRLSMSEHLET). 2 helical membrane passes run 400–420 (GTLV…TTIP) and 421–440 (IPAG…GRLF). F426 contributes to the chloride binding site. Positions 464 to 496 (GAYALAGAAAFSGAVTHTLSTALLAFEVTGQLV) form an intramembrane region, helical. The chain crosses the membrane as a helical span at residues 500–520 (PVLMAVLAANAISQSFQPSFY). Over 521-687 (DGTIIVKKLP…STLTNPPAPK (167 aa)) the chain is Cytoplasmic. 2 consecutive CBS domains span residues 551–609 (MNCA…EPAS) and 626–687 (CPTQ…PAPK).

Belongs to the chloride channel (TC 2.A.49) family. CLCNKB subfamily. As to quaternary structure, homodimer. Interacts with BSND. N-glycosylated. In terms of tissue distribution, specifically expressed in the kidney, predominantly in the outer medulla and cortex. All nephron segments expressing BSND also express CLCNK proteins.

It localises to the basolateral cell membrane. It catalyses the reaction chloride(in) = chloride(out). The catalysed reaction is iodide(out) = iodide(in). The enzyme catalyses nitrate(in) = nitrate(out). It carries out the reaction bromide(in) = bromide(out). Its function is as follows. Anion-selective channel permeable to small monovalent anions with ion selectivity for chloride &gt; bromide &gt; nitrate &gt; iodide. Forms a homodimeric channel where each subunit has its own ion conduction pathway. May conduct double-barreled currents controlled by two types of gates, two fast gates that control each subunit independently and a slow common gate that opens and shuts off both subunits simultaneously. Assembles with the regulatory subunit BSND/Barttin for sorting at the basolateral plasma membrane domain and functional switch to the ion conducting state. CLCNKB:BSND channels display mostly a linear current-voltage relationship controlled by common gate. Mediates chloride conductance along nephron segments, namely the thick ascending limb of Henle's loop, convoluted tubule and the collecting duct, contributing to the maintenance of systemic acid-base and electrolyte homeostasis. Conducts chloride currents in the stria vascularis of the inner ear to establish the endocochlear potential necessary for normal hearing. This is Chloride channel protein ClC-Kb from Mus musculus (Mouse).